Consider the following 705-residue polypeptide: Elongation factor G (705 aa).

The tr-type G domain maps to 8–290 (HRYRNIGIMA…GVIHLLPSPA (283 aa)). Residues 17–24 (AHIDAGKT), 88–92 (DTPGH), and 142–145 (NKMD) contribute to the GTP site.

It belongs to the TRAFAC class translation factor GTPase superfamily. Classic translation factor GTPase family. EF-G/EF-2 subfamily.

It is found in the cytoplasm. Functionally, catalyzes the GTP-dependent ribosomal translocation step during translation elongation. During this step, the ribosome changes from the pre-translocational (PRE) to the post-translocational (POST) state as the newly formed A-site-bound peptidyl-tRNA and P-site-bound deacylated tRNA move to the P and E sites, respectively. Catalyzes the coordinated movement of the two tRNA molecules, the mRNA and conformational changes in the ribosome. The polypeptide is Elongation factor G (Xylella fastidiosa (strain M12)).